Consider the following 287-residue polypeptide: tRNA selenocysteine 1-associated protein 1 (287 aa).

2 RRM domains span residues 3–86 and 96–175; these read ASLW…YATY and YSLF…VAIP.

The protein belongs to the RRM TRSPAP family. In terms of assembly, component of the tRNA(Sec) complex composed at least of EEFSEC, SECISBP2, SEPHS1, SEPSECS, TRNAU1AP and tRNA(Sec). Found in a complex with tRNA(Sec). Interacts with SEPSECS. Associates with mRNP and/or polysomes. Found in a complex with EEFSEC, SECISBP2, TRNAU1AP and tRNA(Sec).

It localises to the nucleus. Its subcellular location is the cytoplasm. Functionally, involved in the early steps of selenocysteine biosynthesis and tRNA(Sec) charging to the later steps resulting in the cotranslational incorporation of selenocysteine into selenoproteins. Stabilizes the SECISBP2, EEFSEC and tRNA(Sec) complex. May be involved in the methylation of tRNA(Sec). Enhances efficiency of selenoproteins synthesis. The polypeptide is tRNA selenocysteine 1-associated protein 1 (TRNAU1AP) (Bos taurus (Bovine)).